Consider the following 253-residue polypeptide: MVSSFTSAPRSGFYYFAQGWKLVSQPGIRRFVILPLLVNILLMGGAFWWLFTQLDVWIPTLMSYVPDWLQWLSYLLWPLAVISVLLVFGYFFSTIANWIAAPFNGLLAEQLEARLTGATPPDTGIFGIMKDVPRIMKREWQKFAWYLPRAIVLLIIYFIPGIGQTVAPVLWFLFSAWMLAIQYCDYPFDNHKVPFKEMRTALRTRKITNMQFGALTSLFTMIPLLNLFIMPVAVCGATAMWVDCYRDKHAMWR.

The next 4 membrane-spanning stretches (helical) occupy residues Phe31–Phe51, Leu75–Ile95, Ile151–Trp171, and Ile222–Val242.

This sequence belongs to the CysZ family.

The protein resides in the cell inner membrane. Its function is as follows. High affinity, high specificity proton-dependent sulfate transporter, which mediates sulfate uptake. Provides the sulfur source for the cysteine synthesis pathway. The protein is Sulfate transporter CysZ of Escherichia coli O139:H28 (strain E24377A / ETEC).